Consider the following 130-residue polypeptide: MTLKKSFSASLLSPFLIICLIALLSVPVSVGARRLLEEPKPEIPTFPELPKPEMPKLPEFPKLELPKLPEIPKPEMPKLPEIQKPELPTFPELPKMPEFPKFDFPKLPELPKPEETKVPAFTMPKFPGSP.

An N-terminal signal peptide occupies residues 1 to 32 (MTLKKSFSASLLSPFLIICLIALLSVPVSVGA). Tandem repeats lie at residues 47-51 (PELPK), 52-56 (PEMPK), 58-62 (PEFPK), 63-67 (LELPK), 69-73 (PEIPK), 74-78 (PEMPK), 80-84 (PEIQK), 91-95 (PELPK), 97-101 (PEFPK), 102-106 (FDFPK), 108-112 (PELPK), 113-117 (PEETK), and 121-125 (FTMPK). The interval 47–125 (PELPKPEMPK…TKVPAFTMPK (79 aa)) is 13 X 5 AA tandem repeat of P-[DEGQ]-[AEFLIV]-[QPT]-K. A compositionally biased stretch (basic and acidic residues) spans 71-84 (IPKPEMPKLPEIQK). Positions 71 to 130 (IPKPEMPKLPEIQKPELPTFPELPKMPEFPKFDFPKLPELPKPEETKVPAFTMPKFPGSP) are disordered. The segment covering 98–117 (EFPKFDFPKLPELPKPEETK) has biased composition (basic and acidic residues).

The protein localises to the secreted. The protein resides in the cell wall. The protein is Protein PELPK2 of Arabidopsis thaliana (Mouse-ear cress).